The sequence spans 207 residues: Uridine kinase (207 aa).

13–20 (GASGSGKT) provides a ligand contact to ATP.

This sequence belongs to the uridine kinase family.

Its subcellular location is the cytoplasm. It catalyses the reaction uridine + ATP = UMP + ADP + H(+). It carries out the reaction cytidine + ATP = CMP + ADP + H(+). Its pathway is pyrimidine metabolism; CTP biosynthesis via salvage pathway; CTP from cytidine: step 1/3. It functions in the pathway pyrimidine metabolism; UMP biosynthesis via salvage pathway; UMP from uridine: step 1/1. In Ureaplasma urealyticum serovar 10 (strain ATCC 33699 / Western), this protein is Uridine kinase.